Here is a 345-residue protein sequence, read N- to C-terminus: MNAHTLVYSGVALACAAMLGSCASGAKEEAEKKAAEQRALLVESAHADRRLMEARIGAQESGADTQHPELFSQIQDVERQSTDAKIEGDLKKAAGVASEAADKYEILRNRVEVADLQSKIQTHQLAQYDGDSANAAEESWKKALELYETDSAQCLQSTVEALESYRKVAHEGFGRLLPDMKARAGAAKTDVGGLKVAVELRPQLEEADSQYQEAREAEEVNARAKAFSGYHRALEIYTELGKVVRLKKTEAEKALQSAKTKQKASSDLARSADKSAPLPENAQGFSKEPIEVEPLPNDRLNTTQADESAPIPISDTSSPSRVQSRGVEDGGRSPKSSMNEEGASR.

The first 21 residues, 1–21, serve as a signal peptide directing secretion; the sequence is MNAHTLVYSGVALACAAMLGS. Cys-22 is lipidated: N-palmitoyl cysteine. Residue Cys-22 is the site of S-diacylglycerol cysteine attachment. The tract at residues 256 to 345 is disordered; the sequence is QSAKTKQKAS…SSMNEEGASR (90 aa). Positions 314 to 323 are enriched in polar residues; it reads SDTSSPSRVQ.

To T.phagedenis TmpA.

It localises to the cell membrane. This chain is Treponemal membrane protein A (tmpA), found in Treponema pallidum (strain Nichols).